A 349-amino-acid chain; its full sequence is Inositol-tetrakisphosphate 1-kinase 2 (349 aa).

1D-myo-inositol 1,3,4-trisphosphate-binding residues include Lys48 and Lys90. The ATP site is built by Arg125 and Lys175. Residues His186 and Lys218 each coordinate 1D-myo-inositol 1,3,4-trisphosphate. Residues 207–218 and Ser233 each bind ATP; that span reads QEFVNHGGILFK. 3 residues coordinate Mg(2+): Asp298, Asp313, and Asn315. Residue Asn315 participates in 1D-myo-inositol 1,3,4-trisphosphate binding.

Belongs to the ITPK1 family. Monomer. The cofactor is Mg(2+).

It catalyses the reaction 1D-myo-inositol 3,4,5,6-tetrakisphosphate + ATP = 1D-myo-inositol 1,3,4,5,6-pentakisphosphate + ADP + H(+). The enzyme catalyses 1D-myo-inositol 1,3,4-trisphosphate + ATP = 1D-myo-inositol 1,3,4,5-tetrakisphosphate + ADP + H(+). It carries out the reaction 1D-myo-inositol 1,3,4-trisphosphate + ATP = 1D-myo-inositol 1,3,4,6-tetrakisphosphate + ADP + H(+). Functionally, kinase that can phosphorylate various inositol polyphosphate such as Ins(3,4,5,6)P4 or Ins(1,3,4)P3 and participates in phytic acid biosynthesis in developing seeds. Phytic acid is the primary storage form of phosphorus in cereal grains and other plant seeds. In Oryza sativa subsp. indica (Rice), this protein is Inositol-tetrakisphosphate 1-kinase 2 (ITPK2).